The chain runs to 138 residues: Acidic phospholipase A2 PL1 (138 aa).

The signal sequence occupies residues 1 to 16; it reads MRALWIVAVCLIGAEG. 7 disulfide bridges follow: Cys-42–Cys-131, Cys-44–Cys-60, Cys-59–Cys-111, Cys-65–Cys-138, Cys-66–Cys-104, Cys-73–Cys-97, and Cys-91–Cys-102. Ca(2+)-binding residues include Tyr-43, Gly-45, and Gly-47. His-63 is a catalytic residue. Asp-64 provides a ligand contact to Ca(2+). Residue Asp-105 is part of the active site.

It belongs to the phospholipase A2 family. Group II subfamily. D49 sub-subfamily. The cofactor is Ca(2+). Expressed by the venom gland.

It localises to the secreted. It catalyses the reaction a 1,2-diacyl-sn-glycero-3-phosphocholine + H2O = a 1-acyl-sn-glycero-3-phosphocholine + a fatty acid + H(+). Its function is as follows. PLA2 catalyzes the calcium-dependent hydrolysis of the 2-acyl groups in 3-sn-phosphoglycerides. This Vipera renardi (Steppe viper) protein is Acidic phospholipase A2 PL1.